The chain runs to 509 residues: MGLPWYRVHTVVLNDPGRLISVHLMHTALVAGWAGSMALYELAIYDPSDPVLNPMWRQGMFVLPFMARLGVTQSWGGWSVTGGTATDPGFWSFEGVAAAHIVLSGLLFLAAVWHWVYWDLELFRDPRTGEPALDLPKMFGIHLFLSGLLCFGFGAFHLTGLFGPGMWISDPYGVTGSVQPVAPEWGPDGFNPFNPGGVVAHHIAAGIVGIIAGLFHLTVRPPERLYKALRMGNIETVLSSSIAAVFFAAFVVAGTMWYGNATTPIELFGPTRYQWDQGYFHQEIERRVQSSVAQGASLSEAWSQIPEKLAFYDYVGNSPAKGGLFRTGPMVKGDGIAQSWQGHGVFKDAEGRELTVRRLPNFFETFPVILTDADGVVRADIPFRRAESKYSFEQSGVTVSFYGGDLDGKTFTDPADVKKYARKAQGGEIFEFDRETLNSDGVFRTSPRGWFTFGHAVFALLFFFGHLWHGARTIYRDVFAGVEADLEEQVEWGLFQKVGDKSTRVRKEA.

Helical transmembrane passes span 21 to 36, 101 to 115, 140 to 156, 203 to 218, 237 to 252, and 457 to 472; these read SVHL…WAGS, IVLS…VWHW, GIHL…FGAF, IAAG…FHLT, VLSS…AFVV, and VFAL…HGAR.

This sequence belongs to the PsbB/PsbC family. PsbB subfamily. PSII is composed of 1 copy each of membrane proteins PsbA, PsbB, PsbC, PsbD, PsbE, PsbF, PsbH, PsbI, PsbJ, PsbK, PsbL, PsbM, PsbT, PsbX, PsbY, PsbZ, Psb30/Ycf12, peripheral proteins PsbO, CyanoQ (PsbQ), PsbU, PsbV and a large number of cofactors. It forms dimeric complexes. It depends on Binds multiple chlorophylls. PSII binds additional chlorophylls, carotenoids and specific lipids. as a cofactor.

It localises to the cellular thylakoid membrane. Functionally, one of the components of the core complex of photosystem II (PSII). It binds chlorophyll and helps catalyze the primary light-induced photochemical processes of PSII. PSII is a light-driven water:plastoquinone oxidoreductase, using light energy to abstract electrons from H(2)O, generating O(2) and a proton gradient subsequently used for ATP formation. This Nostoc sp. (strain PCC 7120 / SAG 25.82 / UTEX 2576) protein is Photosystem II CP47 reaction center protein.